The chain runs to 599 residues: Elongation factor 4 (599 aa).

The region spanning 5 to 187 is the tr-type G domain; sequence SKIRNFSIVA…AIVKRLPAPT (183 aa). GTP is bound by residues 17-22 and 134-137; these read DHGKST and NKID.

It belongs to the TRAFAC class translation factor GTPase superfamily. Classic translation factor GTPase family. LepA subfamily.

The protein localises to the cell inner membrane. It carries out the reaction GTP + H2O = GDP + phosphate + H(+). Required for accurate and efficient protein synthesis under certain stress conditions. May act as a fidelity factor of the translation reaction, by catalyzing a one-codon backward translocation of tRNAs on improperly translocated ribosomes. Back-translocation proceeds from a post-translocation (POST) complex to a pre-translocation (PRE) complex, thus giving elongation factor G a second chance to translocate the tRNAs correctly. Binds to ribosomes in a GTP-dependent manner. This Ruegeria sp. (strain TM1040) (Silicibacter sp.) protein is Elongation factor 4.